Reading from the N-terminus, the 200-residue chain is Probable molybdenum cofactor guanylyltransferase (200 aa).

Residues 8–10 (LAG), Lys20, Asp66, and Asp97 contribute to the GTP site. A Mg(2+)-binding site is contributed by Asp97.

Belongs to the MobA family. Mg(2+) is required as a cofactor.

Its subcellular location is the cytoplasm. The catalysed reaction is Mo-molybdopterin + GTP + H(+) = Mo-molybdopterin guanine dinucleotide + diphosphate. In terms of biological role, transfers a GMP moiety from GTP to Mo-molybdopterin (Mo-MPT) cofactor (Moco or molybdenum cofactor) to form Mo-molybdopterin guanine dinucleotide (Mo-MGD) cofactor. The protein is Probable molybdenum cofactor guanylyltransferase of Bacillus velezensis (strain DSM 23117 / BGSC 10A6 / LMG 26770 / FZB42) (Bacillus amyloliquefaciens subsp. plantarum).